An 87-amino-acid polypeptide reads, in one-letter code: uncharacterized protein (87 aa).

An N-terminal signal peptide occupies residues 1–23 (MAVSVLRLTVVLGLLVLFLTCYA). Residues 24 to 44 (DDKPDKPDDKPDDSGKDPKPD) are disordered.

Its subcellular location is the secreted. This is an uncharacterized protein from Homo sapiens (Human).